Here is a 97-residue protein sequence, read N- to C-terminus: Integration host factor subunit alpha (97 aa).

A disordered region spans residues phenylalanine 50–glutamate 71.

It belongs to the bacterial histone-like protein family. In terms of assembly, heterodimer of an alpha and a beta chain.

This protein is one of the two subunits of integration host factor, a specific DNA-binding protein that functions in genetic recombination as well as in transcriptional and translational control. This Legionella pneumophila (strain Paris) protein is Integration host factor subunit alpha.